Here is a 305-residue protein sequence, read N- to C-terminus: HPr kinase/phosphorylase (305 aa).

Active-site residues include His-136 and Lys-157. Gly-151–Ser-158 serves as a coordination point for ATP. Mg(2+) is bound at residue Ser-158. The active-site Proton acceptor; for phosphorylation activity. Proton donor; for dephosphorylation activity is the Asp-175. The important for the catalytic mechanism of both phosphorylation and dephosphorylation stretch occupies residues Leu-198–Asp-207. Glu-199 is a binding site for Mg(2+). Arg-240 is an active-site residue. Positions Pro-261 to Arg-266 are important for the catalytic mechanism of dephosphorylation.

The protein belongs to the HPrK/P family. As to quaternary structure, homohexamer. It depends on Mg(2+) as a cofactor.

It carries out the reaction [HPr protein]-L-serine + ATP = [HPr protein]-O-phospho-L-serine + ADP + H(+). It catalyses the reaction [HPr protein]-O-phospho-L-serine + phosphate + H(+) = [HPr protein]-L-serine + diphosphate. Functionally, catalyzes the ATP- as well as the pyrophosphate-dependent phosphorylation of a specific serine residue in HPr, a phosphocarrier protein of the phosphoenolpyruvate-dependent sugar phosphotransferase system (PTS). HprK/P also catalyzes the pyrophosphate-producing, inorganic phosphate-dependent dephosphorylation (phosphorolysis) of seryl-phosphorylated HPr (P-Ser-HPr). The two antagonistic activities of HprK/P are regulated by several intracellular metabolites, which change their concentration in response to the absence or presence of rapidly metabolisable carbon sources (glucose, fructose, etc.) in the growth medium. Therefore, by controlling the phosphorylation state of HPr, HPrK/P is a sensor enzyme that plays a major role in the regulation of carbon metabolism and sugar transport: it mediates carbon catabolite repression (CCR), and regulates PTS-catalyzed carbohydrate uptake and inducer exclusion. The polypeptide is HPr kinase/phosphorylase (Clostridium tetani (strain Massachusetts / E88)).